The sequence spans 757 residues: MRFNQYSYINFPKENVLSELKKCGFDLQNTANHKDSLETFLRRFFFTYQDTNYPLSILAADKKTDLLTFFQSEDELTADIFYTVAFQLLGFSYLVDFEDSDVFRKETGFPIIYGDLIENLYQLLNTRTKKGNTLIDQLVSDGLIPEDNDYHYFNGKSLATFSNQDVIREVVYVESRVDTDQKGLSDLVKVSIIRPRFDGKIPAIMTASPYHQGTNDKASDKALYKMEVELEVKLPHKIELEEPQLNLVQPQGQAELVAEAEEKLTHINSSYTLNDYFLPRGFANLYVSGVGTKDSTGFMTNGDYQQIEAYKNVIDWLNGRCRAFTDHTRQRQVKADWSNGKVATTGLSYLGTMSNGLATTGVDGLEVIIAEAGISSWYNYYRENGLVTSPGGYPGEDFDSLAELTYSRNLLAGDYIRGNEAHQADLEKVKAQLDRKTGDYNQFWHDRNYLLNAHKVKAEVVFTHGSQDWNVKPLHVYQMFHALPTHIHKHLFFHNGAHVYMNNWQSIDFRESINALLTKKLLGQETDFQLPTVIWQDNTAPQTWLSLDNFGGQENCETFSLGQEEQAIQNQYPDKDFERYGKTYQTFNTELYQGKANQITINLPVTKDLHLNGRAQLNLRIKSSTNKGLLSAQLLEFGQKKYLQPYPAILSARTIDNGRYHMLENLCELPFRPEAQRVVTKGYLNLQNRNDLLLVEDITADEWMDVQFELQPTIYKLKEGDTLRLVLYTTDFEITIRDNTDYHLTVDLAQSMLTLPC.

Catalysis depends on charge relay system residues Ser-348, Asp-468, and His-498.

Belongs to the peptidase S15 family. Homodimer.

The protein localises to the cytoplasm. It carries out the reaction Hydrolyzes Xaa-Pro-|- bonds to release unblocked, N-terminal dipeptides from substrates including Ala-Pro-|-p-nitroanilide and (sequentially) Tyr-Pro-|-Phe-Pro-|-Gly-Pro-|-Ile.. Removes N-terminal dipeptides sequentially from polypeptides having unsubstituted N-termini provided that the penultimate residue is proline. This chain is Xaa-Pro dipeptidyl-peptidase, found in Streptococcus pneumoniae (strain ATCC 700669 / Spain 23F-1).